The chain runs to 92 residues: Defensin Lucifensin (92 aa).

Positions 1 to 23 are cleaved as a signal peptide; sequence MKFFMVFAVTFCLALSFVSQSLA. A propeptide spanning residues 24-52 is cleaved from the precursor; the sequence is LPADDEAHFVDGLEALKTIEPELHGRYKR. Disulfide bonds link Cys-55–Cys-82, Cys-68–Cys-88, and Cys-72–Cys-90.

This sequence belongs to the invertebrate defensin family. Type 1 subfamily. Post-translationally, the disulfide bonds are essential for antimicrobial activity. In terms of tissue distribution, larval fat body, hemolymph and salivary glands (at protein level). Expressed in the salivary glands of all larval stages.

It localises to the secreted. Its subcellular location is the host cell membrane. Its function is as follows. Shows strong antibacterial activity against numerous Gram-positive bacteria. It selectively inhibits peptidoglycan biosynthesis through complex formation with the cell wall precursor lipid II (1:1 molar ratio) thus inhibiting cell wall synthesis. Shows antibacterial activity against the Gram-positive bacteria M.luteus, E.fecalis (MIC=32 mg/L), S.aureus (MIC=16 mg/L), S.carnosus (MIC=2 mg/L), S.pneumoniae (MIC=2 mg/L) and S.pyogenes (MIC=2 mg/L) and against a number of methicillin-resistant S.aureus and glycopeptide-intermediate S.aureus isolates. Does not show antibacterial activity against Gram-negative bacteria or antifungal activity against C.utilis. Shows slight antifungal activity against C.albicans. This Lucilia sericata (Green bottle fly) protein is Defensin Lucifensin.